Consider the following 378-residue polypeptide: Glutamate 5-kinase (378 aa).

Lysine 20 is an ATP binding site. Substrate contacts are provided by serine 60, aspartate 147, and asparagine 159. ATP is bound by residues 179 to 180 (TD) and 221 to 227 (TGGMATK). The region spanning 286–364 (AGDIVIDAGA…QEIYKVLGYE (79 aa)) is the PUA domain.

It belongs to the glutamate 5-kinase family.

The protein localises to the cytoplasm. The catalysed reaction is L-glutamate + ATP = L-glutamyl 5-phosphate + ADP. It participates in amino-acid biosynthesis; L-proline biosynthesis; L-glutamate 5-semialdehyde from L-glutamate: step 1/2. Its function is as follows. Catalyzes the transfer of a phosphate group to glutamate to form L-glutamate 5-phosphate. This chain is Glutamate 5-kinase, found in Photobacterium profundum (strain SS9).